Here is a 265-residue protein sequence, read N- to C-terminus: 3-methyl-2-oxobutanoate hydroxymethyltransferase (265 aa).

Mg(2+) is bound by residues Asp45 and Asp84. Residues 45–46, Asp84, and Lys112 each bind 3-methyl-2-oxobutanoate; that span reads DS. Glu114 provides a ligand contact to Mg(2+). The Proton acceptor role is filled by Glu181.

This sequence belongs to the PanB family. In terms of assembly, homodecamer; pentamer of dimers. It depends on Mg(2+) as a cofactor.

It localises to the cytoplasm. It carries out the reaction 3-methyl-2-oxobutanoate + (6R)-5,10-methylene-5,6,7,8-tetrahydrofolate + H2O = 2-dehydropantoate + (6S)-5,6,7,8-tetrahydrofolate. Its pathway is cofactor biosynthesis; (R)-pantothenate biosynthesis; (R)-pantoate from 3-methyl-2-oxobutanoate: step 1/2. In terms of biological role, catalyzes the reversible reaction in which hydroxymethyl group from 5,10-methylenetetrahydrofolate is transferred onto alpha-ketoisovalerate to form ketopantoate. This Wigglesworthia glossinidia brevipalpis protein is 3-methyl-2-oxobutanoate hydroxymethyltransferase.